A 170-amino-acid polypeptide reads, in one-letter code: Shikimate kinase (170 aa).

11–16 contributes to the ATP binding site; it reads LSGKST. Mg(2+) is bound at residue Ser-15. Positions 33, 57, and 79 each coordinate substrate. Position 119 (Arg-119) interacts with ATP. Position 137 (Arg-137) interacts with substrate.

This sequence belongs to the shikimate kinase family. In terms of assembly, monomer. Requires Mg(2+) as cofactor.

The protein localises to the cytoplasm. It catalyses the reaction shikimate + ATP = 3-phosphoshikimate + ADP + H(+). It participates in metabolic intermediate biosynthesis; chorismate biosynthesis; chorismate from D-erythrose 4-phosphate and phosphoenolpyruvate: step 5/7. In terms of biological role, catalyzes the specific phosphorylation of the 3-hydroxyl group of shikimic acid using ATP as a cosubstrate. This is Shikimate kinase from Clostridium botulinum (strain ATCC 19397 / Type A).